The chain runs to 1836 residues: Sodium channel protein type 4 subunit alpha (1836 aa).

Topologically, residues 1-131 are cytoplasmic; sequence MARPSLCTLV…RGAIKVLIHA (131 aa). Residues 39-60 show a composition bias toward basic and acidic residues; that stretch reads LQRNKQMEIEEPERKPRSDLEA. Residues 39–63 form a disordered region; sequence LQRNKQMEIEEPERKPRSDLEAGKN. The I repeat unit spans residues 113–454; it reads LLSPFSVVRR…VVAMAYAEQN (342 aa). A helical transmembrane segment spans residues 132 to 150; that stretch reads LFSMFIMITILTNCVFMTM. Topologically, residues 151–157 are extracellular; that stretch reads SDPPPWS. A helical transmembrane segment spans residues 158 to 178; the sequence is KNVEYTFTGIYTFESLIKILA. The Cytoplasmic portion of the chain corresponds to 179 to 192; sequence RGFCVDDFTFLRDP. Residues 193-210 form a helical membrane-spanning segment; the sequence is WNWLDFSVIMMAYLTEFV. Residues 211–216 lie on the Extracellular side of the membrane; sequence DLGNIS. A glycan (N-linked (GlcNAc...) asparagine) is linked at N214. The chain crosses the membrane as a helical span at residues 217 to 233; sequence ALRTFRVLRALKTITVI. At 234-252 the chain is on the cytoplasmic side; the sequence is PGLKTIVGALIQSVKKLSD. The chain crosses the membrane as a helical span at residues 253 to 272; that stretch reads VMILTVFCLSVFALVGLQLF. At 273 to 391 the chain is on the extracellular side; sequence MGNLRQKCVR…PNYGYTSYDT (119 aa). C280 and C360 are oxidised to a cystine. N-linked (GlcNAc...) asparagine glycosylation is found at N288, N291, N297, N303, N315, N321, N333, and N362. Residues C369 and C375 are joined by a disulfide bond. Positions 392 to 416 form an intramembrane region, pore-forming; that stretch reads FSWAFLALFRLMTQDYWENLFQLTL. Residues 417–423 are Extracellular-facing; sequence RAAGKTY. A helical membrane pass occupies residues 424–444; sequence MIFFVVIIFLGSFYLINLILA. Topologically, residues 445-578 are cytoplasmic; sequence VVAMAYAEQN…NIIHLIVMDP (134 aa). Residues 493 to 530 are disordered; it reads GGEADGDPAHGKDCNGSLDTSQGEKGAPRQSSSGDSGI. Over residues 509-528 the composition is skewed to polar residues; the sequence is SLDTSQGEKGAPRQSSSGDS. The stretch at 560 to 832 is one II repeat; the sequence is CCAPWLKFKN…QIAIGRIKLG (273 aa). A helical transmembrane segment spans residues 579 to 597; the sequence is FVDLGITICIVLNTLFMAM. At 598 to 608 the chain is on the extracellular side; it reads EHYPMTEHFDN. A helical transmembrane segment spans residues 609 to 628; that stretch reads VLTVGNLVFTGIFTAEMVLK. At 629–642 the chain is on the cytoplasmic side; sequence LIAMDPYEYFQQGW. The helical transmembrane segment at 643–662 threads the bilayer; it reads NIFDSIIVTLSLVELGLANV. Residues 663-664 lie on the Extracellular side of the membrane; it reads QG. A helical membrane pass occupies residues 665–682; the sequence is LSVLRSFRLLRVFKLAKS. Topologically, residues 683–698 are cytoplasmic; it reads WPTLNMLIKIIGNSVG. Residues 699 to 717 form a helical membrane-spanning segment; that stretch reads ALGNLTLVLAIIVFIFAVV. Residues 718 to 746 lie on the Extracellular side of the membrane; that stretch reads GMQLFGKSYKECVCKIALDCNLPRWHMHD. C731 and C737 form a disulfide bridge. An intramembrane region (pore-forming) is located at residues 747–767; sequence FFHSFLIVFRILCGEWIETMW. Over 768–778 the chain is Extracellular; sequence DCMEVAGQAMC. An intrachain disulfide couples C769 to C778. The chain crosses the membrane as a helical span at residues 779–797; that stretch reads LTVFLMVMVIGNLVVLNLF. Residues 798–1032 lie on the Cytoplasmic side of the membrane; sequence LALLLSSFSA…ACFKIVEHNW (235 aa). Disordered stretches follow at residues 863–885 and 930–992; these read GAGE…PPEE and ESDL…QPEE. The segment covering 876–885 has biased composition (basic and acidic residues); that stretch reads EDEKKEPPEE. 2 stretches are compositionally biased toward acidic residues: residues 930 to 947 and 975 to 992; these read ESDL…FSEP and EDPE…QPEE. Residues 1013–1326 form an III repeat; sequence RGKKWWTLRR…KKYYNAMKKL (314 aa). The chain crosses the membrane as a helical span at residues 1033–1050; that stretch reads FETFIVFMILLSSGALAF. Residues 1051 to 1063 are Extracellular-facing; it reads EDIYIEQRRVIRT. Residues 1064 to 1082 traverse the membrane as a helical segment; sequence ILEYADKVFTYIFIMEMLL. Topologically, residues 1083–1096 are cytoplasmic; that stretch reads KWVAYGFKVYFTNA. A helical transmembrane segment spans residues 1097-1115; sequence WCWLDFLIVDVSIISLVAN. Topologically, residues 1116 to 1123 are extracellular; it reads WLGYSELG. A helical transmembrane segment spans residues 1124-1142; sequence PIKSLRTLRALRPLRALSR. Topologically, residues 1143–1159 are cytoplasmic; that stretch reads FEGMRVVVNALLGAIPS. The chain crosses the membrane as a helical span at residues 1160–1179; sequence IMNVLLVCLIFWLIFSIMGV. Over 1180–1230 the chain is Extracellular; that stretch reads NLFAGKFYYCINTTTSERFDISEVNNKSECESLMHTGQVRWLNVKVNYDNV. C1189 and C1209 are joined by a disulfide. 2 N-linked (GlcNAc...) asparagine glycosylation sites follow: N1191 and N1205. An intramembrane region (pore-forming) is located at residues 1231 to 1252; it reads GLGYLSLLQVATFKGWMDIMYA. Topologically, residues 1253 to 1269 are extracellular; that stretch reads AVDSREKEEQPQYEVNL. A helical membrane pass occupies residues 1270–1291; that stretch reads YMYLYFVIFIIFGSFFTLNLFI. Topologically, residues 1292–1354 are cytoplasmic; it reads GVIIDNFNQQ…MVYDLVTKQA (63 aa). The segment at 1310 to 1312 is important for rapid channel inactivation; that stretch reads IFM. An IV repeat occupies 1335 to 1633; that stretch reads IPRPQNKIQG…WEKFDPDATQ (299 aa). Residues 1355-1372 form a helical membrane-spanning segment; the sequence is FDITIMILICLNMVTMMV. The Extracellular segment spans residues 1373 to 1383; sequence ETDNQSQLKVD. Residues 1384 to 1402 form a helical membrane-spanning segment; sequence ILYNINMIFIIIFTGECVL. The Cytoplasmic portion of the chain corresponds to 1403–1414; sequence KMLALRQYYFTV. The helical transmembrane segment at 1415 to 1432 threads the bilayer; the sequence is GWNIFDFVVVILSIVGLA. Over 1433–1445 the chain is Extracellular; the sequence is LSDLIQKYFVSPT. The helical transmembrane segment at 1446–1462 threads the bilayer; it reads LFRVIRLARIGRVLRLI. Residues 1463–1481 lie on the Cytoplasmic side of the membrane; it reads RGAKGIRTLLFALMMSLPA. Residues 1482–1499 traverse the membrane as a helical segment; sequence LFNIGLLLFLVMFIYSIF. The Extracellular segment spans residues 1500-1521; that stretch reads GMSNFAYVKKESGIDDMFNFET. The segment at residues 1522 to 1544 is an intramembrane region (pore-forming); sequence FGNSIICLFEITTSAGWDGLLNP. The Extracellular segment spans residues 1545–1574; it reads ILNSGPPDCDPNLENPGTSVKGDCGNPSIG. The cysteines at positions 1553 and 1568 are disulfide-linked. Residues 1575 to 1597 traverse the membrane as a helical segment; sequence ICFFCSYIIISFLIVVNMYIAII. Residues 1598-1836 lie on the Cytoplasmic side of the membrane; it reads LENFNVATEE…VRPGVKESLV (239 aa). Positions 1727–1756 constitute an IQ domain; the sequence is EEVCAIKIQRAYRRHLLQRSMKQASYMYRH. The disordered stretch occupies residues 1778–1836; the sequence is KMYGHENGNSSSPSPEEKGEAGDAGPTMGLMPISPSDTAWPPAPPPGQTVRPGVKESLV.

Belongs to the sodium channel (TC 1.A.1.10) family. Nav1.4/SCN4A subfamily. In terms of assembly, the Nav1.4 voltage-gated sodium channel consists of an ion-conducting alpha subunit SCN4A which is functional on its own and a regulatory beta subunit SCN1B. SCN1B strongly enhances the presence of SCN4A at the cell surface. SCN1B is also required for rapid channel inactivation and recovery after inactivation. It prevents the decrease of channel activity in response to repetitive, high-frequency depolarizations. Interacts with the syntrophins SNTA1, SNTB1 and SNTB2 (via PDZ domain); probably links SCN4A to the actin cytoskeleton and the extracellular matrix via the dystrophin-associated protein complex and regulates its localization in muscle cells. Interacts with TMEM233; probable regulator of the channel.

The protein localises to the cell membrane. The enzyme catalyses Na(+)(in) = Na(+)(out). With respect to regulation, the channel is inhibited by tetrodotoxin and saxitoxin. Inhibited by the conotoxin GVIIJ. Its function is as follows. Pore-forming subunit of Nav1.4, a voltage-gated sodium (Nav) channel that directly mediates the depolarizing phase of action potentials in excitable membranes. Navs, also called VGSCs (voltage-gated sodium channels) or VDSCs (voltage-dependent sodium channels), operate by switching between closed and open conformations depending on the voltage difference across the membrane. In the open conformation they allow Na(+) ions to selectively pass through the pore, along their electrochemical gradient. The influx of Na+ ions provokes membrane depolarization, initiating the propagation of electrical signals throughout cells and tissues. Highly expressed in skeletal muscles, Nav1.4 generates the action potential crucial for muscle contraction. The chain is Sodium channel protein type 4 subunit alpha from Homo sapiens (Human).